The primary structure comprises 476 residues: Bifunctional protein HldE (476 aa).

Positions 1-318 (MKPTLPNYDQ…AEAIHGSQDS (318 aa)) are ribokinase. Residue 195-198 (NMLE) participates in ATP binding. D264 is a catalytic residue. A cytidylyltransferase region spans residues 344 to 476 (MTNGCFDILH…IIEAIKGGRG (133 aa)).

In the N-terminal section; belongs to the carbohydrate kinase PfkB family. It in the C-terminal section; belongs to the cytidylyltransferase family. In terms of assembly, homodimer.

The catalysed reaction is D-glycero-beta-D-manno-heptose 7-phosphate + ATP = D-glycero-beta-D-manno-heptose 1,7-bisphosphate + ADP + H(+). It carries out the reaction D-glycero-beta-D-manno-heptose 1-phosphate + ATP + H(+) = ADP-D-glycero-beta-D-manno-heptose + diphosphate. It functions in the pathway nucleotide-sugar biosynthesis; ADP-L-glycero-beta-D-manno-heptose biosynthesis; ADP-L-glycero-beta-D-manno-heptose from D-glycero-beta-D-manno-heptose 7-phosphate: step 1/4. Its pathway is nucleotide-sugar biosynthesis; ADP-L-glycero-beta-D-manno-heptose biosynthesis; ADP-L-glycero-beta-D-manno-heptose from D-glycero-beta-D-manno-heptose 7-phosphate: step 3/4. Catalyzes the phosphorylation of D-glycero-D-manno-heptose 7-phosphate at the C-1 position to selectively form D-glycero-beta-D-manno-heptose-1,7-bisphosphate. Its function is as follows. Catalyzes the ADP transfer from ATP to D-glycero-beta-D-manno-heptose 1-phosphate, yielding ADP-D-glycero-beta-D-manno-heptose. The protein is Bifunctional protein HldE of Aliivibrio salmonicida (strain LFI1238) (Vibrio salmonicida (strain LFI1238)).